A 664-amino-acid polypeptide reads, in one-letter code: Degenerin del-1 (664 aa).

The Cytoplasmic portion of the chain corresponds to 1–67 (MARKYIDILK…IFTTSLYWVR (67 aa)). A helical transmembrane segment spans residues 68–88 (FLWVVVSLVCICLCMYSFSHV). Residues 89–607 (KDKYDRKEKI…WFNLMADMGG (519 aa)) are Extracellular-facing. N-linked (GlcNAc...) asparagine glycans are attached at residues Asn241, Asn300, Asn394, Asn508, and Asn562. The chain crosses the membrane as a helical span at residues 608 to 628 (QAGLFLGASIMSVIEFLFFAV). Residues 629–664 (RTLGIACKPRRWRQKTELLRAEELNDAEKGVSTNNN) are Cytoplasmic-facing.

Belongs to the amiloride-sensitive sodium channel (TC 1.A.6) family.

The protein localises to the membrane. Functionally, probable sodium channel subunit. The sequence is that of Degenerin del-1 (del-1) from Caenorhabditis elegans.